Here is a 345-residue protein sequence, read N- to C-terminus: Heat-inducible transcription repressor HrcA (345 aa).

This sequence belongs to the HrcA family.

Its function is as follows. Negative regulator of class I heat shock genes (grpE-dnaK-dnaJ and groELS operons). Prevents heat-shock induction of these operons. This chain is Heat-inducible transcription repressor HrcA, found in Desulfitobacterium hafniense (strain DSM 10664 / DCB-2).